The sequence spans 389 residues: Chalcone synthase 1 (389 aa).

The active site involves cysteine 164.

This sequence belongs to the thiolase-like superfamily. Chalcone/stilbene synthases family.

It carries out the reaction (E)-4-coumaroyl-CoA + 3 malonyl-CoA + 3 H(+) = 2',4,4',6'-tetrahydroxychalcone + 3 CO2 + 4 CoA. It participates in secondary metabolite biosynthesis; flavonoid biosynthesis. Functionally, the primary product of this enzyme is 4,2',4',6'-tetrahydroxychalcone (also termed naringenin-chalcone or chalcone) which can under specific conditions spontaneously isomerize into naringenin. This chain is Chalcone synthase 1 (CHS1), found in Trifolium subterraneum (Subterranean clover).